The sequence spans 144 residues: Methylglyoxal synthase (144 aa).

In terms of domain architecture, MGS-like spans 1–144 (MKIALIAHDE…KSGEEKETER (144 aa)). Substrate-binding positions include His8, Lys12, 34–37 (TGTT), and 54–55 (SG). The active-site Proton donor/acceptor is the Asp60. His87 contributes to the substrate binding site.

Belongs to the methylglyoxal synthase family.

The catalysed reaction is dihydroxyacetone phosphate = methylglyoxal + phosphate. Its function is as follows. Catalyzes the formation of methylglyoxal from dihydroxyacetone phosphate. This Geobacillus thermodenitrificans (strain NG80-2) protein is Methylglyoxal synthase.